The chain runs to 316 residues: MNKKEPFLATPYLQFNREQWATLRDSVPLTLTKEELIDLKGINEEISLEEVVEIYLPLSRLLNFYISSNLRRQAVLEQFLGTDGQKVPYVIGIAGSVAVGKSTTARLLQALLSRWPEHRSVELITTDGFLHSNSVLNERGLMKKKGFPQSYDMHSLVKFVSDIKSGSKQVSAPVYSHLTYDIVPNEQKFIKQPDILILEGLNVLQSGMDYPHDPHHVFVSDFVDFSIYVDAPEKLLKSWYISRFLKFRQGAFSDPDSYFHSYSKLSEEEAINTASDIWQEINGLNLRQNILPTRERASLIMTKGTNHTIESVRLRK.

95–102 (GSVAVGKS) is an ATP binding site.

The protein belongs to the prokaryotic pantothenate kinase family.

Its subcellular location is the cytoplasm. It catalyses the reaction (R)-pantothenate + ATP = (R)-4'-phosphopantothenate + ADP + H(+). Its pathway is cofactor biosynthesis; coenzyme A biosynthesis; CoA from (R)-pantothenate: step 1/5. This Photorhabdus laumondii subsp. laumondii (strain DSM 15139 / CIP 105565 / TT01) (Photorhabdus luminescens subsp. laumondii) protein is Pantothenate kinase.